A 166-amino-acid polypeptide reads, in one-letter code: uncharacterized protein (166 aa).

The residue at position 2 (A2) is an N-acetylalanine.

As to quaternary structure, homodimer.

This is an uncharacterized protein from Arabidopsis thaliana (Mouse-ear cress).